The primary structure comprises 82 residues: Delta-actitoxin-Aeq2a (82 aa).

Residues 1 to 19 (MNRLMILVFAAVFLALASA) form the signal peptide. Positions 20 to 26 (DEDVDIA) are excised as a propeptide. 3 disulfides stabilise this stretch: cysteine 32/cysteine 79, cysteine 34/cysteine 69, and cysteine 62/cysteine 80.

This sequence belongs to the sea anemone sodium channel inhibitory toxin family. Type I subfamily.

It is found in the secreted. The protein resides in the nematocyst. Functionally, binds specifically to voltage-gated sodium channels (Nav), thereby delaying their inactivation during signal transduction. Causes death to crabs (minimum lethal dose of 25 ug/kg) and mice. The polypeptide is Delta-actitoxin-Aeq2a (Actinia equina (Beadlet anemone)).